Reading from the N-terminus, the 48-residue chain is uncharacterized protein (48 aa).

Residues 1-48 (MLFCNNNNNNNNNNNNNNNNNNNNNNNNNNNNNNNNNNNSSNNNNFSR) are disordered.

This is an uncharacterized protein from Dictyostelium discoideum (Social amoeba).